Here is a 346-residue protein sequence, read N- to C-terminus: Proto-oncogene serine/threonine-protein kinase mos (346 aa).

One can recognise a Protein kinase domain in the interval 60-341 (VCLLQRLGAG…RPLLVDLTSL (282 aa)). ATP contacts are provided by residues 66–74 (LGAGGFGSV) and lysine 87. Aspartate 201 functions as the Proton acceptor in the catalytic mechanism.

This sequence belongs to the protein kinase superfamily. Ser/Thr protein kinase family.

The enzyme catalyses L-seryl-[protein] + ATP = O-phospho-L-seryl-[protein] + ADP + H(+). It catalyses the reaction L-threonyl-[protein] + ATP = O-phospho-L-threonyl-[protein] + ADP + H(+). This Chlorocebus aethiops (Green monkey) protein is Proto-oncogene serine/threonine-protein kinase mos.